Consider the following 1438-residue polypeptide: DNA-directed RNA polymerase subunit beta' (1438 aa).

Zn(2+) contacts are provided by C72, C74, C87, and C90. Mg(2+) contacts are provided by D483, D485, and D487. The Zn(2+) site is built by C831, C905, C912, and C915.

This sequence belongs to the RNA polymerase beta' chain family. As to quaternary structure, the RNAP catalytic core consists of 2 alpha, 1 beta, 1 beta' and 1 omega subunit. When a sigma factor is associated with the core the holoenzyme is formed, which can initiate transcription. The cofactor is Mg(2+). Requires Zn(2+) as cofactor.

It catalyses the reaction RNA(n) + a ribonucleoside 5'-triphosphate = RNA(n+1) + diphosphate. Its function is as follows. DNA-dependent RNA polymerase catalyzes the transcription of DNA into RNA using the four ribonucleoside triphosphates as substrates. This chain is DNA-directed RNA polymerase subunit beta', found in Flavobacterium psychrophilum (strain ATCC 49511 / DSM 21280 / CIP 103535 / JIP02/86).